A 334-amino-acid chain; its full sequence is Glyceraldehyde-3-phosphate dehydrogenase (334 aa).

Residues 12–13 and G111 each bind NAD(+); that span reads TI. 140-142 serves as a coordination point for D-glyceraldehyde 3-phosphate; sequence SCN. Catalysis depends on C141, which acts as the Nucleophile. An NAD(+)-binding site is contributed by R167. A D-glyceraldehyde 3-phosphate-binding site is contributed by 192–193; the sequence is HG. Q298 serves as a coordination point for NAD(+).

Belongs to the glyceraldehyde-3-phosphate dehydrogenase family. In terms of assembly, homotetramer.

It is found in the cytoplasm. The enzyme catalyses D-glyceraldehyde 3-phosphate + phosphate + NADP(+) = (2R)-3-phospho-glyceroyl phosphate + NADPH + H(+). The catalysed reaction is D-glyceraldehyde 3-phosphate + phosphate + NAD(+) = (2R)-3-phospho-glyceroyl phosphate + NADH + H(+). Its pathway is carbohydrate degradation; glycolysis; pyruvate from D-glyceraldehyde 3-phosphate: step 1/5. The sequence is that of Glyceraldehyde-3-phosphate dehydrogenase (gap) from Pyrococcus abyssi (strain GE5 / Orsay).